The primary structure comprises 2293 residues: Protein Ycf2 (2293 aa).

1642–1649 contacts ATP; that stretch reads GSIGTGRS.

Belongs to the Ycf2 family.

It is found in the plastid. It localises to the chloroplast stroma. Probable ATPase of unknown function. Its presence in a non-photosynthetic plant (Epifagus virginiana) and experiments in tobacco indicate that it has an essential function which is probably not related to photosynthesis. The polypeptide is Protein Ycf2 (Platanus occidentalis (Sycamore)).